A 214-amino-acid chain; its full sequence is Octanoyltransferase (214 aa).

The BPL/LPL catalytic domain occupies 32–207 (EDTLDEIWLV…NLLALLNHPP (176 aa)). Residues 71-78 (RGGQVTYH), 138-140 (SLG), and 151-153 (GLA) contribute to the substrate site. The active-site Acyl-thioester intermediate is the Cys-169.

Belongs to the LipB family.

It localises to the cytoplasm. It catalyses the reaction octanoyl-[ACP] + L-lysyl-[protein] = N(6)-octanoyl-L-lysyl-[protein] + holo-[ACP] + H(+). It participates in protein modification; protein lipoylation via endogenous pathway; protein N(6)-(lipoyl)lysine from octanoyl-[acyl-carrier-protein]: step 1/2. In terms of biological role, catalyzes the transfer of endogenously produced octanoic acid from octanoyl-acyl-carrier-protein onto the lipoyl domains of lipoate-dependent enzymes. Lipoyl-ACP can also act as a substrate although octanoyl-ACP is likely to be the physiological substrate. This is Octanoyltransferase from Klebsiella pneumoniae subsp. pneumoniae (strain ATCC 700721 / MGH 78578).